We begin with the raw amino-acid sequence, 162 residues long: Austinoid biosynthesis clusters protein J (162 aa).

This sequence belongs to the trt14 isomerase family. Homodimer.

Its pathway is secondary metabolite biosynthesis; terpenoid biosynthesis. Functionally, part of the gene cluster B that mediates the biosynthesis of austinol and dehydroaustinol, two fungal meroterpenoids. The first step of the pathway is the synthesis of 3,5-dimethylorsellinic acid by the polyketide synthase ausA. 3,5-dimethylorsellinic acid is then prenylated by the polyprenyl transferase ausN. Further epoxidation by the FAD-dependent monooxygenase ausM and cyclization by the probable terpene cyclase ausL lead to the formation of protoaustinoid A. Protoaustinoid A is then oxidized to spiro-lactone preaustinoid A3 by the combined action of the FAD-binding monooxygenases ausB and ausC, and the dioxygenase ausE. Acid-catalyzed keto-rearrangement and ring contraction of the tetraketide portion of preaustinoid A3 by ausJ lead to the formation of preaustinoid A4. The aldo-keto reductase ausK, with the help of ausH, is involved in the next step by transforming preaustinoid A4 into isoaustinone which is in turn hydroxylated by the P450 monooxygenase ausI to form austinolide. Finally, the cytochrome P450 monooxygenase ausG modifies austinolide to austinol. Austinol can be further modified to dehydroaustinol which forms a diffusible complex with diorcinol that initiates conidiation. Due to genetic rearrangements of the clusters and the subsequent loss of some enzymes, the end products of the Emericella nidulans austinoid biosynthesis clusters are austinol and dehydroaustinol, even if additional enzymes, such as the O-acetyltransferase ausQ and the cytochrome P450 monooxygenase ausR are still functional. The polypeptide is Austinoid biosynthesis clusters protein J (Emericella nidulans (strain FGSC A4 / ATCC 38163 / CBS 112.46 / NRRL 194 / M139) (Aspergillus nidulans)).